Consider the following 641-residue polypeptide: Chaperone protein DnaK (641 aa).

The residue at position 200 (threonine 200) is a Phosphothreonine; by autocatalysis. Positions 606–623 (AEQGGNADAASGNAQASK) are enriched in low complexity. A disordered region spans residues 606–628 (AEQGGNADAASGNAQASKAADDV).

It belongs to the heat shock protein 70 family.

Acts as a chaperone. The protein is Chaperone protein DnaK of Xanthomonas axonopodis pv. citri (strain 306).